Consider the following 507-residue polypeptide: Tyrosine protein-kinase src-2 (507 aa).

Basic and acidic residues predominate over residues 1-10 (MGSCIGKEDP). Residues 1-52 (MGSCIGKEDPPPGATSPVHTSSTLGRESLPSHPRIPSIGPIAASSSGNTIDK) form a disordered region. Gly-2 carries N-myristoyl glycine lipidation. Over residues 35-47 (IPSIGPIAASSSG) the composition is skewed to low complexity. Residues 57-118 (SQSANFVALF…PSNYVAREKS (62 aa)) enclose the SH3 domain. The region spanning 124-216 (WYFGKMRRID…GLCVNLGAPC (93 aa)) is the SH2 domain. The Protein kinase domain maps to 240–494 (VRLIRQIGAG…LQWKLEDLFN (255 aa)). Residues 246 to 254 (IGAGQFGEV) and Lys-268 contribute to the ATP site. Asp-358 acts as the Proton acceptor in catalysis. The residue at position 500 (Tyr-500) is a Phosphotyrosine.

It belongs to the protein kinase superfamily. Tyr protein kinase family. SRC subfamily. Requires Mg(2+) as cofactor. Mn(2+) serves as cofactor. May be phosphorylated on Tyr-500 by csk-1. As to expression, expressed in vulva, cells around anus and pharyngeal muscles.

The catalysed reaction is L-tyrosyl-[protein] + ATP = O-phospho-L-tyrosyl-[protein] + ADP + H(+). Its activity is regulated as follows. May be inhibited by csk-1-mediated phosphorylation at Tyr-500. In terms of biological role, non-receptor tyrosine-protein kinase which may play a role in larval and pharynx development. Unlike src-1, does not play a role in embryonic development. This chain is Tyrosine protein-kinase src-2, found in Caenorhabditis elegans.